We begin with the raw amino-acid sequence, 151 residues long: Allatostatin-A (151 aa).

A signal peptide spans 1-21; it reads MNSLHAHLLLLAVCCVGYIAS. The propeptide occupies 22–54; sequence SPVIGQDQRSGDSDADVLLAADEMADNGGDNID. Leu64, Leu88, and Leu99 each carry leucine amide. A propeptide spanning residues 103 to 135 is cleaved from the precursor; that stretch reads SDYDYDQDNEIDYRVPPANYLAAERAVRPGRQN. The tract at residues 131 to 151 is disordered; that stretch reads PGRQNKRTTRPQPFNFGLGRR. Leu148 is modified (leucine amide).

The protein belongs to the allatostatin family.

The protein localises to the secreted. Functionally, may act as a neurotransmitter or neuromodulator. This chain is Allatostatin-A (AstA), found in Drosophila melanogaster (Fruit fly).